The sequence spans 859 residues: Probable helicase A859L (859 aa).

Positions 178-349 (YQELRRSGRA…KNRELFGGVA (172 aa)) constitute a Helicase ATP-binding domain. An ATP-binding site is contributed by 191–198 (MACRCGKT). The DEAH box motif lies at 298 to 301 (DECH). The Helicase C-terminal domain maps to 401–553 (HLKTNITAPK…RFYEHLLNPS (153 aa)).

The protein belongs to the asfivirus helicase A859L family.

This African swine fever virus (isolate Tick/South Africa/Pretoriuskop Pr4/1996) (ASFV) protein is Probable helicase A859L.